The primary structure comprises 275 residues: Large ribosomal subunit protein uL2 (275 aa).

The segment at 223–275 (VAMNPVDHPHGGGEGRTSGGRHPVSPWGQPTKGYKTRSNKRTDKYIVRRRNKK) is disordered.

This sequence belongs to the universal ribosomal protein uL2 family. In terms of assembly, part of the 50S ribosomal subunit. Forms a bridge to the 30S subunit in the 70S ribosome.

Functionally, one of the primary rRNA binding proteins. Required for association of the 30S and 50S subunits to form the 70S ribosome, for tRNA binding and peptide bond formation. It has been suggested to have peptidyltransferase activity; this is somewhat controversial. Makes several contacts with the 16S rRNA in the 70S ribosome. This chain is Large ribosomal subunit protein uL2, found in Shewanella pealeana (strain ATCC 700345 / ANG-SQ1).